The sequence spans 396 residues: Elongation factor Tu (396 aa).

Residues 10 to 206 form the tr-type G domain; the sequence is KPHVNVGTIG…ALDSYIPTPE (197 aa). Positions 19–26 are G1; that stretch reads GHVDHGKT. 19-26 is a GTP binding site; it reads GHVDHGKT. Position 26 (T26) interacts with Mg(2+). The segment at 60–64 is G2; it reads GITIN. Positions 81 to 84 are G3; the sequence is DCPG. GTP is bound by residues 81-85 and 136-139; these read DCPGH and NKCD. A G4 region spans residues 136-139; the sequence is NKCD. The interval 174–176 is G5; it reads SAK.

The protein belongs to the TRAFAC class translation factor GTPase superfamily. Classic translation factor GTPase family. EF-Tu/EF-1A subfamily. As to quaternary structure, monomer.

Its subcellular location is the cytoplasm. It carries out the reaction GTP + H2O = GDP + phosphate + H(+). Its function is as follows. GTP hydrolase that promotes the GTP-dependent binding of aminoacyl-tRNA to the A-site of ribosomes during protein biosynthesis. The sequence is that of Elongation factor Tu from Herminiimonas arsenicoxydans.